A 249-amino-acid polypeptide reads, in one-letter code: 1-(5-phosphoribosyl)-5-[(5-phosphoribosylamino)methylideneamino] imidazole-4-carboxamide isomerase (249 aa).

Aspartate 8 serves as the catalytic Proton acceptor. Aspartate 130 (proton donor) is an active-site residue.

Belongs to the HisA/HisF family.

The protein localises to the cytoplasm. It carries out the reaction 1-(5-phospho-beta-D-ribosyl)-5-[(5-phospho-beta-D-ribosylamino)methylideneamino]imidazole-4-carboxamide = 5-[(5-phospho-1-deoxy-D-ribulos-1-ylimino)methylamino]-1-(5-phospho-beta-D-ribosyl)imidazole-4-carboxamide. The protein operates within amino-acid biosynthesis; L-histidine biosynthesis; L-histidine from 5-phospho-alpha-D-ribose 1-diphosphate: step 4/9. The sequence is that of 1-(5-phosphoribosyl)-5-[(5-phosphoribosylamino)methylideneamino] imidazole-4-carboxamide isomerase from Nitrosococcus oceani (strain ATCC 19707 / BCRC 17464 / JCM 30415 / NCIMB 11848 / C-107).